Here is a 209-residue protein sequence, read N- to C-terminus: HTLV-1 basic zipper factor (209 aa).

The segment at 48 to 162 (DGLLSLEEES…SARKEKMQEL (115 aa)) is disordered. 2 stretches are compositionally biased toward basic and acidic residues: residues 70–87 (APPR…AEEK) and 94–114 (REKE…EEKA). The short motif at 87 to 92 (KRKRKK) is the Nuclear localization signal 1 element. 2 consecutive short sequence motifs (nuclear localization signal) follow at residues 116–120 (RRRRA) and 137–141 (RRERK). Positions 122-160 (KKAADVARRKQEEQERRERKWRQGAEKAKQHSARKEKMQ) are enriched in basic and acidic residues.

Belongs to the HTLV-1 HBZ protein family. As to quaternary structure, interacts with host ATF4; this interaction inhibits viral RNA transcriptional activation by preventing ATF4 binding to Tax-responsive elements. Interacts with host CREB1; this interaction inhibits host CREB1 transcriptional activity. Interacts with host JUN, JUNB and JUND. Interacts with host EP300.

It is found in the host nucleus. Its function is as follows. Contributes to the regulation of viral RNA transcription by interacting with host proteins involved in transcriptional activation such as ATF4, or CREB1, and by inhibiting their activity. Additionally, HBZ suppresses host NF-kappa-B-driven transcription mediated by host RELA as well as transcription of some classical NF-kappa-B target genes, including IL8, IL2RA, IRF4, VCAM1, and VEGFA. This Homo sapiens (Human) protein is HTLV-1 basic zipper factor (HBZ).